The primary structure comprises 376 residues: Protein-tyrosine sulfotransferase 2 (376 aa).

At 1 to 8 (MRLSVRKV) the chain is on the cytoplasmic side. Residues 9–25 (LLAVGCALALVLAVQLG) traverse the membrane as a helical; Signal-anchor for type II membrane protein segment. The Lumenal portion of the chain corresponds to 26 to 376 (QQVLECRAVL…NSTSPHLGSS (351 aa)). 77 to 81 (RSGTT) provides a ligand contact to 3'-phosphoadenylyl sulfate. Cys-95 and Cys-155 form a disulfide bridge. Residue Glu-98 is the Proton donor/acceptor of the active site. The interaction with peptide substrate stretch occupies residues 100-104 (RIIPR). Positions 182, 190, and 194 each coordinate 3'-phosphoadenylyl sulfate. Cysteines 224 and 232 form a disulfide. 3'-phosphoadenylyl sulfate-binding positions include Tyr-237, 284–293 (STDQVIKPVN), and Lys-299. N-linked (GlcNAc...) asparagine glycans are attached at residues Asn-342 and Asn-367.

The protein belongs to the protein sulfotransferase family. In terms of assembly, homodimer. Can also form heterodimers with TPST1. Post-translationally, N-glycosylated.

The protein localises to the golgi apparatus membrane. The catalysed reaction is L-tyrosyl-[protein] + 3'-phosphoadenylyl sulfate = O-sulfo-L-tyrosine-[protein] + adenosine 3',5'-bisphosphate + H(+). In terms of biological role, catalyzes the O-sulfation of tyrosine residues within acidic motifs of polypeptides, using 3'-phosphoadenylyl sulfate (PAPS) as cosubstrate. This chain is Protein-tyrosine sulfotransferase 2 (Tpst2), found in Rattus norvegicus (Rat).